We begin with the raw amino-acid sequence, 1099 residues long: Protein DDB_G0287365 (1099 aa).

The N-terminal stretch at 1–24 (MMSFNLILILIIFLILIQNYVIDG) is a signal peptide. A G8 domain is found at 47–174 (KSWKKLKLPI…TKTTWTKLIS (128 aa)). 5 N-linked (GlcNAc...) asparagine glycosylation sites follow: Asn-62, Asn-137, Asn-664, Asn-764, and Asn-858.

Belongs to the CEMIP family.

The chain is Protein DDB_G0287365 from Dictyostelium discoideum (Social amoeba).